We begin with the raw amino-acid sequence, 102 residues long: Small ribosomal subunit protein uS10 (102 aa).

This sequence belongs to the universal ribosomal protein uS10 family. In terms of assembly, part of the 30S ribosomal subunit.

In terms of biological role, involved in the binding of tRNA to the ribosomes. This chain is Small ribosomal subunit protein uS10, found in Saccharolobus islandicus (strain M.16.4 / Kamchatka #3) (Sulfolobus islandicus).